Reading from the N-terminus, the 488-residue chain is Probable malate:quinone oxidoreductase (488 aa).

Belongs to the MQO family. FAD is required as a cofactor.

It catalyses the reaction (S)-malate + a quinone = a quinol + oxaloacetate. It participates in carbohydrate metabolism; tricarboxylic acid cycle; oxaloacetate from (S)-malate (quinone route): step 1/1. This chain is Probable malate:quinone oxidoreductase, found in Neisseria meningitidis serogroup C / serotype 2a (strain ATCC 700532 / DSM 15464 / FAM18).